Reading from the N-terminus, the 570-residue chain is Proline--tRNA ligase (570 aa).

Belongs to the class-II aminoacyl-tRNA synthetase family. ProS type 1 subfamily. Homodimer.

It is found in the cytoplasm. It catalyses the reaction tRNA(Pro) + L-proline + ATP = L-prolyl-tRNA(Pro) + AMP + diphosphate. Catalyzes the attachment of proline to tRNA(Pro) in a two-step reaction: proline is first activated by ATP to form Pro-AMP and then transferred to the acceptor end of tRNA(Pro). As ProRS can inadvertently accommodate and process non-cognate amino acids such as alanine and cysteine, to avoid such errors it has two additional distinct editing activities against alanine. One activity is designated as 'pretransfer' editing and involves the tRNA(Pro)-independent hydrolysis of activated Ala-AMP. The other activity is designated 'posttransfer' editing and involves deacylation of mischarged Ala-tRNA(Pro). The misacylated Cys-tRNA(Pro) is not edited by ProRS. This Shewanella oneidensis (strain ATCC 700550 / JCM 31522 / CIP 106686 / LMG 19005 / NCIMB 14063 / MR-1) protein is Proline--tRNA ligase.